The primary structure comprises 3961 residues: Replicase polyprotein 1ab (3961 aa).

Residues 8–28 form a C4-type; atypical zinc finger; sequence CTCTPNARVFVAEGQVYCTRC. The Peptidase C31 domain maps to 69–180; that stretch reads ECSPAGACWL…EDFCPFECAM (112 aa). Residues 69–182 are PCP1-alpha; the sequence is ECSPAGACWL…FCPFECAMAT (114 aa). Catalysis depends on for Nsp1-alpha papain-like cysteine proteinase activity residues Cys76 and His146. The tract at residues 199-200 is important for host EIF2AK2 inhibition; the sequence is IS. The PCP1-beta stretch occupies residues 263-382; sequence DTVPEGNCWW…IFRFGSHKWY (120 aa). The 121-residue stretch at 263–383 folds into the Peptidase C32 domain; it reads DTVPEGNCWW…FRFGSHKWYG (121 aa). Residues Cys270 and His339 each act as for Nsp1-beta papain-like cysteine proteinase activity in the active site. The OTU-like stretch occupies residues 426–513; sequence LKHYSPPAEG…GEHWTVTVTP (88 aa). A Peptidase C33 domain is found at 428–535; it reads HYSPPAEGNC…QGCCEHKGGL (108 aa). Catalysis depends on for Nsp2 cysteine proteinase activity residues Cys437 and His506. Disordered stretches follow at residues 809–862, 898–979, and 1153–1213; these read RWTP…NSWE, ATPL…GVLG, and NQEP…GGGP. The segment covering 810 to 819 has biased composition (pro residues); that stretch reads WTPPPPPPKV. The next 8 helical transmembrane spans lie at 1266–1286, 1296–1316, 1345–1365, 1368–1388, 1583–1603, 1650–1670, 1685–1705, and 1719–1739; these read LCLF…LGVF, GVFG…SDPV, SLVV…LGGA, IWHF…GAYV, LMAA…GIYV, ALVA…FVSI, CILL…LCVF, and ILWL…LAMV. Positions 1266–1388 are HD1; the sequence is LCLFLCYSYP…ADCILAGAYV (123 aa). The HD2 stretch occupies residues 1583–1745; it reads LMAALHVACS…LAMVLLVSLW (163 aa). A Peptidase S32 domain is found at 1810–2013; that stretch reads GAFRTRKPSL…ALLAAKPELE (204 aa). Residues His1848, Asp1873, and Ser1927 each act as charge relay system; for 3C-like serine proteinase activity in the active site. The next 5 helical transmembrane spans lie at 2012 to 2032, 2060 to 2080, 2092 to 2112, 2137 to 2157, and 2164 to 2184; these read LEGG…WRMM, FSFG…ILMI, WSLA…LAAT, SPVP…LYLF, and QILV…FAEG. The interval 2036-2157 is HD3; that stretch reads WTPLVAVSFF…HLLAIILYLF (122 aa). The disordered stretch occupies residues 2329–2358; the sequence is PTPTPPPAPVPIPLPPKVLENGPNAWGDED. The segment covering 2330–2344 has biased composition (pro residues); the sequence is TPTPPPAPVPIPLPP. One can recognise a NiRAN domain in the interval 2488–2651; that stretch reads IIDKLQGLTK…LPYKLYPVRG (164 aa). Residues 2890–3024 form the RdRp catalytic domain; it reads GRCLEADLAS…YAESPTMPNY (135 aa). The AV ZBD domain occupies 3145–3208; it reads GKKSRVCGYC…SPVGKGTSPL (64 aa). Cys3151, Cys3154, Cys3164, Cys3169, His3172, His3174, His3176, His3178, Cys3185, His3187, Cys3194, and Cys3197 together coordinate Zn(2+). Residues 3265-3417 enclose the (+)RNA virus helicase ATP-binding domain; the sequence is ASTALLPTCK…VFDIMPQTQL (153 aa). 3298-3305 provides a ligand contact to ATP; that stretch reads GKTYWLLQ. Positions 3418–3546 constitute a (+)RNA virus helicase C-terminal domain; sequence KTIWRFGQNI…AVHRDGQLIV (129 aa). In terms of domain architecture, AV-Nsp11N/CoV-Nsp15M spans 3585–3681; the sequence is EGSSSPLPKV…LTKFVKGEAQ (97 aa). The NendoU domain maps to 3683–3805; the sequence is LPETVFSTGR…MVWRDKTAYF (123 aa). Residues His3714, His3729, and Lys3758 contribute to the active site.

The protein belongs to the arteriviridae polyprotein family. In terms of assembly, nsp1-alpha papain-like: Interacts with host RNF31. As to quaternary structure, interacts with host EIF2AK2; this interaction occurs in host stress granules and leads to EIF2AK2 inhibition. Interacts with host G3BP1; this interaction probably plays a role in Nsp1-beta-mediated inhibition of host EIF2AK2. Interacts with host DDX18; this interaction redistributes host DDX18 to the cytoplasm. In terms of assembly, interacts with host IFITM1. As to quaternary structure, interacts with host DDX5. Interacts with host OTULIN. In terms of assembly, interacts with host LGALS3. Specific enzymatic cleavages in vivo by its own proteases yield mature proteins. Nsp1 is autocleaved into two subunits, Nsp1-alpha and Nsp1-beta. There are two alternative pathways for processing. Either nsp4-5 is cleaved, which represents the major pathway or the nsp5-6 and nsp6-7 are processed, which represents the minor pathway. The major pathway occurs when nsp2 acts as a cofactor for nsp4.

It localises to the host nucleus. Its subcellular location is the host cytoplasm. The protein resides in the host membrane. It is found in the host endoplasmic reticulum. The protein localises to the host perinuclear region. The catalysed reaction is RNA(n) + a ribonucleoside 5'-triphosphate = RNA(n+1) + diphosphate. The enzyme catalyses ATP + H2O = ADP + phosphate + H(+). It carries out the reaction Thiol-dependent hydrolysis of ester, thioester, amide, peptide and isopeptide bonds formed by the C-terminal Gly of ubiquitin (a 76-residue protein attached to proteins as an intracellular targeting signal).. It catalyses the reaction uridylyl-uridylyl-ribonucleotide-RNA = a 3'-end uridylyl-2',3'-cyclophospho-uridine-RNA + a 5'-end dephospho-ribonucleoside-RNA. Its function is as follows. Contains the activities necessary for the transcription of negative stranded RNA, leader RNA, subgenomic mRNAs and progeny virion RNA as well as proteinases responsible for the cleavage of the polyprotein into functional products. Functionally, inhibits host IFN-beta production. Plays a role in the degradation of the host transcriptional activator CREBBP protein. The degradation of host CREBBP which is a key component of the IFN enhanceosome is likely responsible for the inhibition of interferon mediated by Nsp1-alpha. Also participates in the inhibition of host NF-kappa-B activation by counteracting LUBAC-dependent induction of NF-kappa-B. Reduces host NEMO ubiquitination by blocking the interaction between the two LUBAC complex components RNF31 and SHARPIN. Plays a role in blocking host mRNA nuclear export to the cytoplasm and subversion of host protein synthesis. Additionally, inhibits the interferon-activated JAK/STAT signal transduction by mediating the ubiquitination and subsequent proteasomal degradation of host KPNA1. Repurposes the host antiviral stress granules into a proviral platform to counteract the EIF2AK2/PKR restriction, thereby regulating the host inflammatory response. In terms of biological role, multifunctional protein that acts as a viral protease and as a viral antagonist of host immune response. Cleaves the nsp2/nsp3 site in the viral polyprotein. Displays deubiquitinating activity that cleaves both ubiquitinated and ISGylated products and therefore inhibits ubiquitin and ISG15-dependent host innate immunity. Also deubiquinates host NFKBIA, thereby interfering with NFKBIA degradation and impairing subsequent NF-kappa-B activation. Its function is as follows. Plays a role in the inhibition of the immune response by interacting with host IFITM1. This interaction leads to the proteasomal degradation of the IFN-induced antiviral protein IFITM1. Functionally, cleaves the majority of cleavage sites present in the C-terminus of the polyprotein. Triggers host apoptosis through caspase-3, -8, and -9 activations. Subverts host innate immune responses through its protease activity. Targets the NF-kappa-B essential modulator NEMO and mediates its cleavage. Blocks host interferon beta induction and downstream signaling by cleaving mitochondrial MAVS, dislodging it from the mitochondria. Impairs host defense by cleaving host mRNA-decapping enzyme DCP1A to attenuate its antiviral activity. Plays a role in the initial induction of autophagosomes from host endoplasmic reticulum. In terms of biological role, plays a role in the inhibition of host STAT3 signaling pathway by inducing the degradation of STAT3. Its function is as follows. Responsible for replication and transcription of the viral RNA genome. Functionally, displays RNA and DNA duplex-unwinding activities with 5' to 3' polarity. Plays a role in viral transcription/replication and prevents the simultaneous activation of host cell dsRNA sensors, such as MDA5/IFIH1, OAS, PKR and NLRP3 inflammasome. Acts by degrading the 5'-polyuridines generated during replication of the poly(A) region of viral genomic and subgenomic RNAs. Catalyzes a two-step reaction in which a 2'3'-cyclic phosphate (2'3'-cP) is first generated by 2'-O transesterification, which is then hydrolyzed to a 3'-phosphate (3'-P). If not degraded, poly(U) RNA would hybridize with poly(A) RNA tails and activate host dsRNA sensors. Also plays a role in the inhibition of host type I interferon production by recruiting host OTULIN to promote removal of linear ubiquitination targeting host NEMO. The polypeptide is Replicase polyprotein 1ab (rep) (Porcine reproductive and respiratory syndrome virus (strain 16244B) (PRRSV)).